A 94-amino-acid chain; its full sequence is Ribonuclease VapC3 (94 aa).

Asp6 contacts Mg(2+).

It belongs to the PINc/VapC protein family. Mg(2+) is required as a cofactor.

In terms of biological role, toxic component of a type II toxin-antitoxin (TA) system. An RNase. Its cognate antitoxin is VapB3. This Methanocaldococcus jannaschii (strain ATCC 43067 / DSM 2661 / JAL-1 / JCM 10045 / NBRC 100440) (Methanococcus jannaschii) protein is Ribonuclease VapC3 (vapC3).